The primary structure comprises 79 residues: Small ribosomal subunit protein bS18 (79 aa).

This sequence belongs to the bacterial ribosomal protein bS18 family. Part of the 30S ribosomal subunit. Forms a tight heterodimer with protein bS6.

Its function is as follows. Binds as a heterodimer with protein bS6 to the central domain of the 16S rRNA, where it helps stabilize the platform of the 30S subunit. In Rhodopseudomonas palustris (strain BisB18), this protein is Small ribosomal subunit protein bS18.